Consider the following 518-residue polypeptide: Cytokinin hydroxylase (518 aa).

Residues 1–21 traverse the membrane as a helical segment; sequence MLLTILKSLLVIFVTTILRVL. Cys-464 contributes to the heme binding site.

Belongs to the cytochrome P450 family. Heme serves as cofactor. As to expression, expressed in roots and flowers.

The protein resides in the membrane. It catalyses the reaction N(6)-(dimethylallyl)adenosine 5'-phosphate + NADPH + O2 + H(+) = 9-ribosyl-trans-zeatin 5'-phosphate + NADP(+) + H2O. It carries out the reaction N(6)-(dimethylallyl)adenosine 5'-diphosphate + NADPH + O2 + H(+) = 9-ribosyl-trans-zeatin 5'-diphosphate + NADP(+) + H2O. The catalysed reaction is N(6)-(dimethylallyl)adenosine 5'-triphosphate + NADPH + O2 + H(+) = 9-ribosyl-trans-zeatin 5'-triphosphate + NADP(+) + H2O. In terms of biological role, cytokinin hydroxylase that catalyzes the biosynthesis of trans-zeatin via the isopentenyladenine riboside 5'-monophosphate (iPRMP)-dependent pathway. Can use isopentenyladenosine-5'-monophosphate, isopentenyladenosine-5'-diphosphate and isopentenyladenosine-5'-triphosphate as substrate. The sequence is that of Cytokinin hydroxylase (CYP735A1) from Arabidopsis thaliana (Mouse-ear cress).